The primary structure comprises 426 residues: Meiotically up-regulated gene 170 protein (426 aa).

It belongs to the arrestin family.

It is found in the cytoplasm. Its subcellular location is the nucleus. Has a role in meiosis. The polypeptide is Meiotically up-regulated gene 170 protein (mug170) (Schizosaccharomyces pombe (strain 972 / ATCC 24843) (Fission yeast)).